The following is a 455-amino-acid chain: Probable galactarate/D-glucarate transporter GudP (455 aa).

A run of 12 helical transmembrane segments spans residues 19–39, 59–79, 87–107, 108–128, 153–173, 177–197, 253–273, 289–309, 320–340, 348–368, 386–406, and 414–434; these read WFIV…RATL, YVFS…GWLL, IIAL…AIGF, FSAG…GLSE, AFFN…MGWL, FGWH…AVIW, IGVY…LTWF, GFVA…GGIV, LTFA…SMIV, WLVV…ALGW, LFNT…GYIV, and GALV…LLLV.

Belongs to the major facilitator superfamily. Phthalate permease family.

It localises to the cell membrane. The enzyme catalyses galactarate(in) + H(+)(in) = galactarate(out) + H(+)(out). It carries out the reaction D-glucarate(in) + H(+)(in) = D-glucarate(out) + H(+)(out). Its function is as follows. Probably involved in the uptake of galactarate and/or D-glucarate. The polypeptide is Probable galactarate/D-glucarate transporter GudP (Bacillus subtilis (strain 168)).